A 295-amino-acid chain; its full sequence is NAD kinase (295 aa).

Asp74 functions as the Proton acceptor in the catalytic mechanism. NAD(+) is bound by residues 74–75 (DG), 148–149 (NE), Arg176, Asp178, and 189–194 (TAYAMS).

Belongs to the NAD kinase family. A divalent metal cation is required as a cofactor.

It is found in the cytoplasm. It carries out the reaction NAD(+) + ATP = ADP + NADP(+) + H(+). Involved in the regulation of the intracellular balance of NAD and NADP, and is a key enzyme in the biosynthesis of NADP. Catalyzes specifically the phosphorylation on 2'-hydroxyl of the adenosine moiety of NAD to yield NADP. This is NAD kinase from Acidithiobacillus ferrooxidans (strain ATCC 23270 / DSM 14882 / CIP 104768 / NCIMB 8455) (Ferrobacillus ferrooxidans (strain ATCC 23270)).